Consider the following 448-residue polypeptide: Argininosuccinate synthase (448 aa).

ATP contacts are provided by residues 17-25 (AFSGGLDTS) and alanine 43. Tyrosine 99 serves as a coordination point for L-citrulline. Glycine 129 and threonine 131 together coordinate ATP. L-aspartate contacts are provided by threonine 131, asparagine 135, and aspartate 136. Asparagine 135 contributes to the L-citrulline binding site. Aspartate 136 contributes to the ATP binding site. L-citrulline is bound by residues arginine 139 and serine 192. An ATP-binding site is contributed by aspartate 194. Positions 201, 203, and 280 each coordinate L-citrulline.

It belongs to the argininosuccinate synthase family. Type 2 subfamily. As to quaternary structure, homotetramer.

The protein localises to the cytoplasm. The catalysed reaction is L-citrulline + L-aspartate + ATP = 2-(N(omega)-L-arginino)succinate + AMP + diphosphate + H(+). Its pathway is amino-acid biosynthesis; L-arginine biosynthesis; L-arginine from L-ornithine and carbamoyl phosphate: step 2/3. The sequence is that of Argininosuccinate synthase from Pectobacterium atrosepticum (strain SCRI 1043 / ATCC BAA-672) (Erwinia carotovora subsp. atroseptica).